We begin with the raw amino-acid sequence, 89 residues long: Small ribosomal subunit protein bS18 (89 aa).

The span at 1–15 (MTTANTNETAAAAAA) shows a compositional bias: low complexity. The disordered stretch occupies residues 1–22 (MTTANTNETAAAAAAKNRRNKK).

This sequence belongs to the bacterial ribosomal protein bS18 family. As to quaternary structure, part of the 30S ribosomal subunit. Forms a tight heterodimer with protein bS6.

Functionally, binds as a heterodimer with protein bS6 to the central domain of the 16S rRNA, where it helps stabilize the platform of the 30S subunit. The chain is Small ribosomal subunit protein bS18 from Caldanaerobacter subterraneus subsp. tengcongensis (strain DSM 15242 / JCM 11007 / NBRC 100824 / MB4) (Thermoanaerobacter tengcongensis).